Consider the following 597-residue polypeptide: Protein IQ-DOMAIN 29 (597 aa).

The tract at residues 1–31 (MGKTPSPGKWIKSLLGKKSSKSSLEKGGEKL) is disordered. IQ domains follow at residues 106–134 (LEEA…GITR), 135–153 (VQAV…ATYS), and 157–183 (GIVK…QKTN). The segment at 159 to 173 (VKVQALVRGKKARSS) is calmodulin-binding. The short motif at 264–271 (KKRSFQAV) is the Nuclear localization signal 1 element. Disordered regions lie at residues 268–379 (FQAV…KKEI) and 407–597 (LIPV…EWKR). The span at 289–300 (STTANSSTSRST) shows a compositional bias: low complexity. The segment covering 319 to 329 (ELSKIENDKSK) has biased composition (basic and acidic residues). A Nuclear localization signal 2 motif is present at residues 356–363 (HKKASLSN). Over residues 414–463 (KESDLDKDEKSLVLDKPEQDELRTAERDDKAEEELKTAERDDSAEEKIQE) the composition is skewed to basic and acidic residues. Residues 467-480 (QISSENGNVASENT) are compositionally biased toward polar residues. Basic and acidic residues predominate over residues 481-500 (KPSDRRASLPAKIENHHQDD). Polar residues predominate over residues 572-584 (GSMNSDRSFSSSK). A compositionally biased stretch (basic and acidic residues) spans 585 to 597 (DIGDKSTKAEWKR).

It belongs to the IQD family. As to quaternary structure, binds to multiple calmodulin (CaM) in the presence of Ca(2+) and CaM-like proteins.

The protein resides in the nucleus. The protein localises to the nucleus envelope. It is found in the cytoplasm. Its subcellular location is the cytoskeleton. It localises to the cell membrane. In terms of biological role, may be involved in cooperative interactions with calmodulins or calmodulin-like proteins. Recruits calmodulin proteins to microtubules, thus being a potential scaffold in cellular signaling and trafficking. May associate with nucleic acids and regulate gene expression at the transcriptional or post-transcriptional level. This chain is Protein IQ-DOMAIN 29, found in Arabidopsis thaliana (Mouse-ear cress).